Reading from the N-terminus, the 500-residue chain is Cytochrome P450 2D16 (500 aa).

Serine 249 bears the Phosphoserine mark. Cysteine 446 provides a ligand contact to heme.

This sequence belongs to the cytochrome P450 family. Heme serves as cofactor. In terms of tissue distribution, expressed at high levels in the inner zone of the adrenal cortex.

Its subcellular location is the endoplasmic reticulum membrane. The protein resides in the microsome membrane. The enzyme catalyses an organic molecule + reduced [NADPH--hemoprotein reductase] + O2 = an alcohol + oxidized [NADPH--hemoprotein reductase] + H2O + H(+). Cytochromes P450 are a group of heme-thiolate monooxygenases. In liver microsomes, this enzyme is involved in an NADPH-dependent electron transport pathway. It oxidizes a variety of structurally unrelated compounds, including steroids, fatty acids, and xenobiotics. This Cavia porcellus (Guinea pig) protein is Cytochrome P450 2D16 (CYP2D16).